The sequence spans 96 residues: MNLRPLHDRVIVKRLDNETKTASGIVIPDNAAEKPDQGEVLAIGPGKKDDKGNNIALDVKVGDRVLFGKYAGQAVKVEGQELLVMREEDIMAVVNK.

This sequence belongs to the GroES chaperonin family. As to quaternary structure, heptamer of 7 subunits arranged in a ring. Interacts with the chaperonin GroEL.

It localises to the cytoplasm. Functionally, together with the chaperonin GroEL, plays an essential role in assisting protein folding. The GroEL-GroES system forms a nano-cage that allows encapsulation of the non-native substrate proteins and provides a physical environment optimized to promote and accelerate protein folding. GroES binds to the apical surface of the GroEL ring, thereby capping the opening of the GroEL channel. In Cupriavidus necator (strain ATCC 17699 / DSM 428 / KCTC 22496 / NCIMB 10442 / H16 / Stanier 337) (Ralstonia eutropha), this protein is Co-chaperonin GroES.